The chain runs to 1307 residues: MESPSCIQDEPFPHPLEPEPSAPAQPGATKPGDKRFRLWYVGGSCLDRRTTLPMLPWLMAEIRRRSQKPDAGGCGAPAAREVILVLSAPFLRCVPAPGAGVGGGAGSGAVQPNTGVFIFEHKAQHISRFIHNSHDLTYFAYLIKAQPDDPESQMACHVFRATDPNQVPDVISSIRQLSKAAMKEDSKPSKDNEDAFYNSQKFEVLYCGRVIVTHKKAPSSLIDDCKDKFSLHEQQRLKLQGERGGDPGDEMGVLEVESPVSPDDSLPEKADGTVNSPRALPSLASLPALASQPALASSRVCFPERILEDCGFDEQQEFRSRCSSVTGVMQKKVHENNQKTQPRRRHASAPSHVQPSDSEKNRTMLFQVGRFEINLISPDTKSVVLEKNFKDISSCSQGIKHVDHFGFICRESPEPGLSQYICYVFQCANESLVDEVMLTLKQAFSTAAALQSAKTQIKLCETCPMHSLHKLCERIEGLYPPRAKLVIQRHLSSLTDNEQADIFERVQKMKPISDQEENELVILHLRQLCEAKQRTHVHIGEGPAIISNSTIPENVTSGGRFKLDVLKNKAKRSLTSSLENIFSRGANRMRGRLGSMDSFERANSLASEKDFSPGDSPPGTPPASPLSSAWHAFPEEDSDSPQFRRRAHTFSHPPSSSRRKLNLQDGKAHGLRSPLLRQSSSEQCSIVPSARRMYKESNSSCSLPSLHTSFSAPSFTAPSFLKSFYQNSGRLSPQYENEIRQDTASESSDGEGRKRTSSTCSNESLNAGGTPVTPRRVSWRQRIFLRVASPVNKSPSAMQQQKDGLDRTELLPLSPLSPTMEEEPLIIFLSGDEDTEKVEEKKKSKELKSLWKKAIHQQILLLRMEKENQKLEEARRDELQSRKVKLDYEEVGTCQKEILIAWDKKLLNCRTKIRCDMEDIHTSLKEGVPKSRRGEIWQFLALQYRLRHRLPNKHQPPDTSYKELLKQLTAQQHAILVDLGRTFPTHPYFSVQLGAGQLSLFNLLKAYSLLDKEVGYCQGISFVAGVLLLHMSEEQAFEMLKFLMYDLGFRKQYRPDMMSLQIQMYQLSRLLHDYHRELYNHLEENEISPSLYAAPWFLTLFASQFPLGFVARVFDIIFLQGTEVIFKVALSLLSSQEALIMECENFENIVEFLKSTLPDMNTTEMEKIITQVFEMDISKQLHAYEVEYHVLQDELLESSYACEDNESLEKLERANNQLKRQNMDLLEKLQVAHAKIQALESNLETLLTRETKMKALIRTLEQDKMAYQKTVEQIRKLLPADALANCELLLKDLTHPTNDKAKAGNKP.

The residue at position 1 (Met1) is an N-acetylmethionine. The interval 1-30 is disordered; sequence MESPSCIQDEPFPHPLEPEPSAPAQPGATK. Over residues 13–23 the composition is skewed to pro residues; that stretch reads PHPLEPEPSAP. In terms of domain architecture, PID 1 spans 53-209; that stretch reads PMLPWLMAEI…QKFEVLYCGR (157 aa). A compositionally biased stretch (basic and acidic residues) spans 237 to 246; that stretch reads LKLQGERGGD. The tract at residues 237–276 is disordered; sequence LKLQGERGGDPGDEMGVLEVESPVSPDDSLPEKADGTVNS. Phosphoserine occurs at positions 258, 261, and 320. Positions 319–475 constitute a PID 2 domain; the sequence is RSRCSSVTGV…HSLHKLCERI (157 aa). 2 positions are modified to phosphoserine; by PKB/AKT1: Ser324 and Ser348. The tract at residues 330–360 is disordered; it reads QKKVHENNQKTQPRRRHASAPSHVQPSDSEK. Ser351 is modified (phosphoserine). Lys484 is modified (N6-acetyllysine). Ser573 carries the phosphoserine modification. At Thr575 the chain carries Phosphothreonine. Ser577 is subject to Phosphoserine; by PKB/AKT1. At Arg584 the chain carries Omega-N-methylarginine. Ser595 carries the post-translational modification Phosphoserine; by PKB/AKT1. Phosphoserine occurs at positions 598 and 616. 2 disordered regions span residues 603–684 and 732–774; these read NSLA…SEQC and SPQY…PVTP. Pro residues predominate over residues 615 to 624; it reads DSPPGTPPAS. Position 620 is a phosphothreonine (Thr620). Ser624 is modified (phosphoserine). The residue at position 649 (Thr649) is a Phosphothreonine; by PKB/AKT1. Ser673 carries the phosphoserine modification. The span at 757-767 shows a compositional bias: polar residues; that stretch reads SSTCSNESLNA. Ser758 is subject to Phosphoserine; by PKB/AKT1. Residues Ser761 and Ser764 each carry the phosphoserine modification. Residue Thr770 is modified to Phosphothreonine. Positions 927 to 1121 constitute a Rab-GAP TBC domain; that stretch reads GVPKSRRGEI…RVFDIIFLQG (195 aa).

Post-translationally, phosphorylated by AKT1; insulin-induced. Also phosphorylated by AMPK in response to insulin. Insulin-stimulated phosphorylation is required for SLC2A4/GLUT4 translocation. Has no effect on SLC2A4/GLUT4 internalization. Widely expressed, including in pancreatic beta cells.

Its subcellular location is the cytoplasm. Functionally, may act as a GTPase-activating protein for RAB2A, RAB8A, RAB10 and RAB14. Promotes insulin-induced glucose transporter SLC2A4/GLUT4 translocation at the plasma membrane, thus increasing glucose uptake. The polypeptide is TBC1 domain family member 4 (Tbc1d4) (Mus musculus (Mouse)).